The following is a 246-amino-acid chain: Thaumatin-like protein 1 (246 aa).

The signal sequence occupies residues 1–24 (MMKSQAALLGLTTLAILFFSGAHA). 8 disulfide bridges follow: Cys-33/Cys-245, Cys-81/Cys-91, Cys-96/Cys-103, Cys-151/Cys-234, Cys-156/Cys-217, Cys-164/Cys-180, Cys-184/Cys-193, and Cys-194/Cys-204.

It belongs to the thaumatin family. In terms of tissue distribution, equally expressed in the abscission zone and surrounding tissues of both fruitlets and leaves.

It is found in the secreted. May be involved in protecting plant tissues from pathogen infection. This Prunus persica (Peach) protein is Thaumatin-like protein 1.